The sequence spans 166 residues: Lactose-binding lectin l-2 (166 aa).

An N-terminal signal peptide occupies residues Met1 to Gly24. 3 cysteine pairs are disulfide-bonded: Cys34/Cys45, Cys62/Cys160, and Cys136/Cys152. The C-type lectin domain occupies His41 to Val161.

In terms of assembly, homodimer; disulfide-linked. As to expression, skin; contained within club cells which are a component of the epidermis in combination with epithelial cells and mucus cells (at protein level).

It is found in the secreted. Functionally, involved in host defense at the body surface. Causes agglutination and suppresses the growth of the Gram-negative bacterium E.coli K12. Possesses calcium-independent hemagglutinating activity. In Anguilla japonica (Japanese eel), this protein is Lactose-binding lectin l-2.